Reading from the N-terminus, the 447-residue chain is Argininosuccinate synthase (447 aa).

ATP is bound by residues 20-28 and Ala46; that span reads AFSGGLDTS. Tyr102 contributes to the L-citrulline binding site. Gly132 and Thr134 together coordinate ATP. Residues Thr134, Asn138, and Asp139 each contribute to the L-aspartate site. Asn138 provides a ligand contact to L-citrulline. Asp139 is a binding site for ATP. L-citrulline is bound by residues Arg142 and Ser195. Residue Asp197 participates in ATP binding. Residues Thr204, Glu206, and Glu283 each coordinate L-citrulline.

This sequence belongs to the argininosuccinate synthase family. Type 2 subfamily. In terms of assembly, homotetramer.

The protein resides in the cytoplasm. It catalyses the reaction L-citrulline + L-aspartate + ATP = 2-(N(omega)-L-arginino)succinate + AMP + diphosphate + H(+). The protein operates within amino-acid biosynthesis; L-arginine biosynthesis; L-arginine from L-ornithine and carbamoyl phosphate: step 2/3. The polypeptide is Argininosuccinate synthase (Neisseria meningitidis serogroup C / serotype 2a (strain ATCC 700532 / DSM 15464 / FAM18)).